The following is a 133-amino-acid chain: Ribosome-binding factor A (133 aa).

The protein belongs to the RbfA family. As to quaternary structure, monomer. Binds 30S ribosomal subunits, but not 50S ribosomal subunits or 70S ribosomes.

It is found in the cytoplasm. One of several proteins that assist in the late maturation steps of the functional core of the 30S ribosomal subunit. Associates with free 30S ribosomal subunits (but not with 30S subunits that are part of 70S ribosomes or polysomes). Required for efficient processing of 16S rRNA. May interact with the 5'-terminal helix region of 16S rRNA. In Enterobacter sp. (strain 638), this protein is Ribosome-binding factor A.